Reading from the N-terminus, the 226-residue chain is UPF0758 protein CHY_0341 (226 aa).

In terms of domain architecture, MPN spans N104–F226. Positions 175, 177, and 188 each coordinate Zn(2+). The JAMM motif motif lies at H175–D188.

The protein belongs to the UPF0758 family.

This chain is UPF0758 protein CHY_0341, found in Carboxydothermus hydrogenoformans (strain ATCC BAA-161 / DSM 6008 / Z-2901).